We begin with the raw amino-acid sequence, 470 residues long: MTSPRTLYDKIWDDHVVDVQPDGSSLLYIDRHLVHEVTSPQAFEGLRVAGRKVRHPEKTLAVVDHNVQTSDRSQGIDDPESRTQLEALAENVRDFGIEFYDALDRRQGIVHIIGPEQGFTLPGQTIVCGDSHTSTHGAFGALAHGIGTSEVEHVLATQTLVQRKARNMRVSVDGTLPPGVTAKDIILAIIGEIGTAGGTGHVIEYAGEAIRALSMEGRMTICNMSIEGGARAGMVAPDATTFAYVKDRPKAPKGAAFDAARRYWESLVTDAGAHFDREVRLDAANLPPIVSWGTSPEDVISVQGRIPDPSEIADENKRQSKEKALAYMGLTPGTRITDITLDRIFIGSCTNGRIEDLREVARVVGDRKVHEGVSAMIVPGSGLVKAQAEAEGLDKILKAAGFDWREPGCSMCLGMNPDKLRPGERCASTSNRNFEGRQGPRGRTHLVSPAMAAAAAVAGRFVDIREWPQG.

Residues Cys349, Cys409, and Cys412 each contribute to the [4Fe-4S] cluster site.

It belongs to the aconitase/IPM isomerase family. LeuC type 1 subfamily. As to quaternary structure, heterodimer of LeuC and LeuD. It depends on [4Fe-4S] cluster as a cofactor.

It carries out the reaction (2R,3S)-3-isopropylmalate = (2S)-2-isopropylmalate. Its pathway is amino-acid biosynthesis; L-leucine biosynthesis; L-leucine from 3-methyl-2-oxobutanoate: step 2/4. Functionally, catalyzes the isomerization between 2-isopropylmalate and 3-isopropylmalate, via the formation of 2-isopropylmaleate. In Methylobacterium radiotolerans (strain ATCC 27329 / DSM 1819 / JCM 2831 / NBRC 15690 / NCIMB 10815 / 0-1), this protein is 3-isopropylmalate dehydratase large subunit.